Here is a 103-residue protein sequence, read N- to C-terminus: MSRVCDVTGLAKSFGNKVSHSNRKTKRSYLVNLHNVTLVSEVLGRKFKMKVAARTLRTINYKGGFDLYLLNTASRKLSDEAQKIKRKIRAAIASGKSLQCGVL.

Belongs to the bacterial ribosomal protein bL28 family.

This is Large ribosomal subunit protein bL28 from Anaplasma marginale (strain St. Maries).